Here is a 379-residue protein sequence, read N- to C-terminus: MTAIRYEFIKTCKQTGARLGRVHTPHGSFDTPTFMPVGTLATVKTMSPEELKAMDSGIILSNTYHLWLRPGHEIVREAGGLHKFMNWDRAILTDSGGFQVFSLSDFRRIEEEGVHFRNHLNGDKLFLSPEKAMEIQNALGSDIMMAFDECPPFPATFEYMKKSVERTSRWAERCLKAHERPQDQGLFGIVQGGEFEELRRQSAKDLVSMDFPGYAVGGLSVGEPKDIMNRVLEFTTPLLPDNKPRYLMGVGSPDSLIDGAIRGIDMFDCVLPTRIARNGTCMTSEGRLVVKNAKFARDFGPLDPNCDCYTCKNYSRAYIRHLMKCDETFGIRLTSYHNLHFLLNLMEQVRQAIREDRLGDFREEFFEQYGFNKPNAKNF.

Catalysis depends on Asp94, which acts as the Proton acceptor. Residues 94 to 98, Asp148, Gln191, and Gly218 each bind substrate; that span reads DSGGF. An RNA binding region spans residues 249-255; it reads GVGSPDS. The active-site Nucleophile is Asp268. The tract at residues 273–277 is RNA binding; important for wobble base 34 recognition; sequence TRIAR. Zn(2+) is bound by residues Cys306, Cys308, Cys311, and His337.

The protein belongs to the queuine tRNA-ribosyltransferase family. In terms of assembly, homodimer. Within each dimer, one monomer is responsible for RNA recognition and catalysis, while the other monomer binds to the replacement base PreQ1. Zn(2+) serves as cofactor.

It catalyses the reaction 7-aminomethyl-7-carbaguanine + guanosine(34) in tRNA = 7-aminomethyl-7-carbaguanosine(34) in tRNA + guanine. It functions in the pathway tRNA modification; tRNA-queuosine biosynthesis. Functionally, catalyzes the base-exchange of a guanine (G) residue with the queuine precursor 7-aminomethyl-7-deazaguanine (PreQ1) at position 34 (anticodon wobble position) in tRNAs with GU(N) anticodons (tRNA-Asp, -Asn, -His and -Tyr). Catalysis occurs through a double-displacement mechanism. The nucleophile active site attacks the C1' of nucleotide 34 to detach the guanine base from the RNA, forming a covalent enzyme-RNA intermediate. The proton acceptor active site deprotonates the incoming PreQ1, allowing a nucleophilic attack on the C1' of the ribose to form the product. After dissociation, two additional enzymatic reactions on the tRNA convert PreQ1 to queuine (Q), resulting in the hypermodified nucleoside queuosine (7-(((4,5-cis-dihydroxy-2-cyclopenten-1-yl)amino)methyl)-7-deazaguanosine). The protein is Queuine tRNA-ribosyltransferase of Bacillus cereus (strain Q1).